The primary structure comprises 811 residues: Capsid protein VP1 (811 aa).

The tract at residues 321–367 (DSPMQEATKRKADSPAVETPAKKGTTGVNVNSQSTDPQNPSSSGATT) is disordered. Over residues 346 to 366 (TGVNVNSQSTDPQNPSSSGAT) the composition is skewed to polar residues.

The protein resides in the virion. Functionally, capsid protein self-assembles to form an icosahedral capsid with a T=1 symmetry, about 22 nm in diameter, and consisting of 60 copies of size variants of the capsid proteins, which differ in the N-terminushe capsid encapsulates the genomic ssDNA. Capsid proteins are responsible for the attachment to host cell receptors. This attachment induces virion internalization predominantly through clathrin-dependent endocytosis. The sequence is that of Capsid protein VP1 (VP) from Galleria mellonella densovirus (GmDNV).